We begin with the raw amino-acid sequence, 336 residues long: N-acetylornithine carbamoyltransferase (336 aa).

Residues 49–52, Trp-77, and Arg-112 contribute to the carbamoyl phosphate site; that span reads SMRT. Glu-144 contacts N(2)-acetyl-L-ornithine. Position 148–151 (148–151) interacts with carbamoyl phosphate; that stretch reads HPCQ. N(2)-acetyl-L-ornithine-binding residues include Lys-252 and Leu-295. 294-295 contributes to the carbamoyl phosphate binding site; sequence CL. Lys-302 is modified (N6-carboxylysine). Residue Arg-322 participates in carbamoyl phosphate binding.

The protein belongs to the aspartate/ornithine carbamoyltransferase superfamily. AOTCase family. Homotrimer.

It localises to the cytoplasm. It carries out the reaction N(2)-acetyl-L-ornithine + carbamoyl phosphate = N(2)-acetyl-L-citrulline + phosphate + H(+). It functions in the pathway amino-acid biosynthesis; L-arginine biosynthesis. With respect to regulation, carboxylation at Lys-302 increases the catalytic activity of the enzyme. Catalyzes the transfer of the carbamoyl group from carbamoyl phosphate to the delta-amino group of N(2)-acetyl-L-ornithine to produce N(2)-acetyl-L-citrulline. This is a step in an alternative arginine biosynthesis pathway. The enzyme has no activity with ornithine. In Xylella fastidiosa (strain Temecula1 / ATCC 700964), this protein is N-acetylornithine carbamoyltransferase.